The sequence spans 277 residues: uncharacterized protein (277 aa).

Belongs to the BtpA family.

The protein resides in the mitochondrion. This is an uncharacterized protein from Caenorhabditis elegans.